A 340-amino-acid chain; its full sequence is Large ribosomal subunit protein uL29m (340 aa).

A compositionally biased stretch (polar residues) spans 1–10 (MIRSLHTSAV). The tract at residues 1–22 (MIRSLHTSAVRQGRKKWPKPLP) is disordered.

It belongs to the universal ribosomal protein uL29 family. Component of the mitochondrial large ribosomal subunit. Mature mitochondrial ribosomes consist of a small (37S) and a large (54S) subunit. The 37S subunit contains at least 33 different proteins and 1 molecule of RNA (15S). The 54S subunit contains at least 45 different proteins and 1 molecule of RNA (21S).

Its subcellular location is the mitochondrion. This chain is Large ribosomal subunit protein uL29m (MRPL4), found in Yarrowia lipolytica (strain CLIB 122 / E 150) (Yeast).